We begin with the raw amino-acid sequence, 231 residues long: Chromosome partition protein MukE (231 aa).

The interval 195-231 (MIRDGEAMPVEGSLSLKDDSDDNDRTDDTAPETGEDE) is disordered. Positions 213-231 (DSDDNDRTDDTAPETGEDE) are enriched in acidic residues.

This sequence belongs to the MukE family. Interacts, and probably forms a ternary complex, with MukF and MukB. The complex formation is stimulated by calcium or magnesium.

The protein localises to the cytoplasm. The protein resides in the nucleoid. Involved in chromosome condensation, segregation and cell cycle progression. May participate in facilitating chromosome segregation by condensation DNA from both sides of a centrally located replisome during cell division. Probably acts via its interaction with MukB and MukF. This chain is Chromosome partition protein MukE, found in Pectobacterium atrosepticum (strain SCRI 1043 / ATCC BAA-672) (Erwinia carotovora subsp. atroseptica).